Here is a 113-residue protein sequence, read N- to C-terminus: uncharacterized protein (113 aa).

This sequence belongs to the ycf68 family.

It is found in the plastid. The protein localises to the chloroplast. This is an uncharacterized protein from Eucalyptus globulus subsp. globulus (Tasmanian blue gum).